The chain runs to 30 residues: Photosystem I reaction center subunit XII (30 aa).

A helical transmembrane segment spans residues 6–26 (VFTILAIALVPAVMAALLGSA).

It belongs to the PsaM family.

It is found in the cellular thylakoid membrane. In Synechococcus sp. (strain JA-3-3Ab) (Cyanobacteria bacterium Yellowstone A-Prime), this protein is Photosystem I reaction center subunit XII.